The chain runs to 451 residues: Probable carboxypeptidase PMAA_093910 (451 aa).

The first 19 residues, 1–19, serve as a signal peptide directing secretion; the sequence is MKVSSLLPSVLLLVGATRA. Asn-149 carries an N-linked (GlcNAc...) asparagine glycan. Zn(2+) is bound at residue Asp-171. Glu-203 serves as the catalytic Proton acceptor. A Zn(2+)-binding site is contributed by Glu-204. Asn-354 is a glycosylation site (N-linked (GlcNAc...) asparagine).

Belongs to the peptidase M20A family. It depends on Zn(2+) as a cofactor.

It localises to the secreted. This chain is Probable carboxypeptidase PMAA_093910, found in Talaromyces marneffei (strain ATCC 18224 / CBS 334.59 / QM 7333) (Penicillium marneffei).